The chain runs to 205 residues: LexA repressor (205 aa).

The H-T-H motif DNA-binding region spans 28-48; sequence RAEIARRLGFKSANAAEEHLK. Active-site for autocatalytic cleavage activity residues include S122 and K159.

The protein belongs to the peptidase S24 family. As to quaternary structure, homodimer.

The enzyme catalyses Hydrolysis of Ala-|-Gly bond in repressor LexA.. Functionally, represses a number of genes involved in the response to DNA damage (SOS response), including recA and lexA. In the presence of single-stranded DNA, RecA interacts with LexA causing an autocatalytic cleavage which disrupts the DNA-binding part of LexA, leading to derepression of the SOS regulon and eventually DNA repair. This Shewanella loihica (strain ATCC BAA-1088 / PV-4) protein is LexA repressor.